The chain runs to 876 residues: Serrate RNA effector molecule homolog (876 aa).

The tract at residues 1 to 90 (MGDSDDEYDR…RRDWDEHSSD (90 aa)) is disordered. G2 carries the N-acetylglycine modification. Position 4 is a phosphoserine (S4). Y8 is modified (phosphotyrosine). Basic and acidic residues predominate over residues 8–73 (YDRRRRDKFR…ERFSPPRHEL (66 aa)). 3 positions are modified to phosphoserine: S67, S74, and S136. A Glycyl lysine isopeptide (Lys-Gly) (interchain with G-Cter in SUMO2) cross-link involves residue K150. The interval 272-413 (EEEEQAGKPG…PKDAPGLECK (142 aa)) is disordered. Positions 297–347 (DGERKANEKDDKKEDGKQAENESSSDDKIKKSEGDGDKEEKKEDSEKEAKK) are enriched in basic and acidic residues. Acidic residues predominate over residues 370–387 (SESESESGQAEEEKEEAD). The span at 388 to 413 (ETLKEKEKPKEEEREKPKDAPGLECK) shows a compositional bias: basic and acidic residues. The residue at position 493 (S493) is a Phosphoserine. The residue at position 544 (T544) is a Phosphothreonine. At S570 the chain carries Phosphoserine. Positions 575-597 (ELLGSSGGAPPEEPPKEGNPAEI) are disordered. Residue T671 is modified to Phosphothreonine. S679 carries the post-translational modification Phosphoserine. Omega-N-methylarginine is present on residues R833, R840, and R850. The disordered stretch occupies residues 835–854 (NYDAFRGQGGYPGKPRNRMV).

It belongs to the ARS2 family. As to quaternary structure, interacts with CASP8AP2, ERBB4, NCBP1/CBP80 and DROSHA. Interacts with LUZP4. Interacts with NCBP2/CBP20 and NCBP3. Interacts with MTREX.

Its subcellular location is the nucleus. The protein localises to the nucleoplasm. The protein resides in the cytoplasm. Functionally, acts as a mediator between the cap-binding complex (CBC) and the primary microRNAs (miRNAs) processing machinery during cell proliferation. Contributes to the stability and delivery of capped primary miRNA transcripts to the primary miRNA processing complex containing DGCR8 and DROSHA, thereby playing a role in RNA-mediated gene silencing (RNAi) by miRNAs. Binds capped RNAs (m7GpppG-capped RNA); however interaction is probably mediated via its interaction with NCBP1/CBP80 component of the CBC complex. Involved in cell cycle progression at S phase. Does not directly confer arsenite resistance but rather modulates arsenic sensitivity. Independently of its activity on miRNAs, necessary and sufficient to promote neural stem cell self-renewal. Does so by directly binding SOX2 promoter and positively regulating its transcription. This Bos taurus (Bovine) protein is Serrate RNA effector molecule homolog (SRRT).